A 148-amino-acid polypeptide reads, in one-letter code: UPF0251 protein Cbei_2962 (148 aa).

The protein belongs to the UPF0251 family.

The chain is UPF0251 protein Cbei_2962 from Clostridium beijerinckii (strain ATCC 51743 / NCIMB 8052) (Clostridium acetobutylicum).